The primary structure comprises 301 residues: Homoserine O-acetyltransferase (301 aa).

The Acyl-thioester intermediate role is filled by C142. Substrate is bound by residues K163 and S192. Residue H235 is the Proton acceptor of the active site. The active site involves E237. Position 249 (R249) interacts with substrate.

The protein belongs to the MetA family.

The protein localises to the cytoplasm. It carries out the reaction L-homoserine + acetyl-CoA = O-acetyl-L-homoserine + CoA. Its pathway is amino-acid biosynthesis; L-methionine biosynthesis via de novo pathway; O-acetyl-L-homoserine from L-homoserine: step 1/1. In terms of biological role, transfers an acetyl group from acetyl-CoA to L-homoserine, forming acetyl-L-homoserine. The polypeptide is Homoserine O-acetyltransferase (Bacillus cereus (strain ATCC 14579 / DSM 31 / CCUG 7414 / JCM 2152 / NBRC 15305 / NCIMB 9373 / NCTC 2599 / NRRL B-3711)).